Here is a 513-residue protein sequence, read N- to C-terminus: uncharacterized protein (513 aa).

Residues 3-61 (NLKIGQKLQLEIERMGINGEGIGVISGRLVFIPYALPGEEVLVEITENARNFSRAKLVK) enclose the TRAM domain. Gln-309, Tyr-338, Asp-359, and Asp-407 together coordinate S-adenosyl-L-methionine. Residue Cys-434 is the Nucleophile of the active site.

It belongs to the class I-like SAM-binding methyltransferase superfamily. RNA M5U methyltransferase family.

This is an uncharacterized protein from Lactococcus lactis subsp. lactis (strain IL1403) (Streptococcus lactis).